Here is a 123-residue protein sequence, read N- to C-terminus: UPF0426 protein At1g28150, chloroplastic (123 aa).

The N-terminal 26 residues, 1–26 (MGFVLICTCPPSSGVVVSQLHHHQFS), are a transit peptide targeting the chloroplast. The disordered stretch occupies residues 97 to 123 (SGITEEEVDADGVVSNDEDSPQQIEIE). Over residues 100–123 (TEEEVDADGVVSNDEDSPQQIEIE) the composition is skewed to acidic residues.

Belongs to the UPF0426 family.

The protein localises to the plastid. Its subcellular location is the chloroplast. It is found in the plastoglobule. This chain is UPF0426 protein At1g28150, chloroplastic, found in Arabidopsis thaliana (Mouse-ear cress).